Consider the following 354-residue polypeptide: Fe(3+) ions import ATP-binding protein FbpC (354 aa).

The ABC transporter domain occupies Leu-4–Leu-236. Residue Gly-36 to Thr-43 participates in ATP binding.

This sequence belongs to the ABC transporter superfamily. Fe(3+) ion importer (TC 3.A.1.10) family. In terms of assembly, the complex is composed of two ATP-binding proteins (FbpC), two transmembrane proteins (FbpB) and a solute-binding protein (FbpA).

It is found in the cell inner membrane. The catalysed reaction is Fe(3+)(out) + ATP + H2O = Fe(3+)(in) + ADP + phosphate + H(+). Part of the ABC transporter complex FbpABC involved in Fe(3+) ions import. Responsible for energy coupling to the transport system. This Pseudomonas fluorescens (strain ATCC BAA-477 / NRRL B-23932 / Pf-5) protein is Fe(3+) ions import ATP-binding protein FbpC.